Here is a 115-residue protein sequence, read N- to C-terminus: Large ribosomal subunit protein bL19 (115 aa).

This sequence belongs to the bacterial ribosomal protein bL19 family.

In terms of biological role, this protein is located at the 30S-50S ribosomal subunit interface and may play a role in the structure and function of the aminoacyl-tRNA binding site. This Streptococcus pneumoniae serotype 2 (strain D39 / NCTC 7466) protein is Large ribosomal subunit protein bL19.